The sequence spans 462 residues: Cysteine--tRNA ligase (462 aa).

Cysteine 30 contributes to the Zn(2+) binding site. The 'HIGH' region motif lies at 32–42 (MTVYDYCHVGH). Residues cysteine 214, histidine 239, and glutamate 243 each coordinate Zn(2+). Positions 271 to 275 (KMSKS) match the 'KMSKS' region motif. Lysine 274 contacts ATP.

It belongs to the class-I aminoacyl-tRNA synthetase family. As to quaternary structure, monomer. It depends on Zn(2+) as a cofactor.

It is found in the cytoplasm. It carries out the reaction tRNA(Cys) + L-cysteine + ATP = L-cysteinyl-tRNA(Cys) + AMP + diphosphate. This chain is Cysteine--tRNA ligase, found in Cupriavidus necator (strain ATCC 17699 / DSM 428 / KCTC 22496 / NCIMB 10442 / H16 / Stanier 337) (Ralstonia eutropha).